The primary structure comprises 185 residues: MLLVIGLGNPGKEYQYTRHNVGFIAIEKIANQYNSSFSTKKKFNCEIAETISYGQKIIFIKPTTYMNLSGKSVISVKTYYNIYPAKSFVIHDDIDLETGRVKFKTGGGNGGHNGLKSIDGVIGNNYNRIRIGVGRPQNNQDLADYVLNHFSKPEYKTVMQAIDRITSNFGLILENKLEEFKNKMA.

Residue Y14 coordinates tRNA. The active-site Proton acceptor is H19. TRNA is bound by residues Y65, N67, and N113.

The protein belongs to the PTH family. In terms of assembly, monomer.

It localises to the cytoplasm. It carries out the reaction an N-acyl-L-alpha-aminoacyl-tRNA + H2O = an N-acyl-L-amino acid + a tRNA + H(+). In terms of biological role, hydrolyzes ribosome-free peptidyl-tRNAs (with 1 or more amino acids incorporated), which drop off the ribosome during protein synthesis, or as a result of ribosome stalling. Functionally, catalyzes the release of premature peptidyl moieties from peptidyl-tRNA molecules trapped in stalled 50S ribosomal subunits, and thus maintains levels of free tRNAs and 50S ribosomes. This chain is Peptidyl-tRNA hydrolase, found in Rickettsia rickettsii (strain Iowa).